A 338-amino-acid chain; its full sequence is uncharacterized protein (338 aa).

Residues 20-40 (IFFTLTFSLSNLFLAICYLFL) form a helical membrane-spanning segment.

The protein localises to the membrane. This is an uncharacterized protein from Schizosaccharomyces pombe (strain 972 / ATCC 24843) (Fission yeast).